The chain runs to 420 residues: MAP kinase-interacting serine/threonine-protein kinase 1 (420 aa).

A disordered region spans residues 1 to 25; it reads MGSSEPIPIAESDKRKKKKRKARAT. S27 is subject to Phosphoserine; by PAK2. The region spanning 37–321 is the Protein kinase domain; it reads KLTSELLGEG…AAQVLQHPWV (285 aa). ATP is bound by residues 43-51 and K66; that span reads LGEGANAKV. D158 serves as the catalytic Proton acceptor. 2 positions are modified to phosphoserine: S168 and S173. Residues T197, T202, and T332 each carry the phosphothreonine modification. Residues 386-420 are disordered; that stretch reads LSPPSKSRLARRRALAQAGRSGDAPPSPTPTTPAP. The span at 400–409 shows a compositional bias: low complexity; that stretch reads LAQAGRSGDA. Over residues 410–420 the composition is skewed to pro residues; sequence PPSPTPTTPAP.

Belongs to the protein kinase superfamily. CAMK Ser/Thr protein kinase family. Interacts with the C-terminal regions of EIF4G1 and EIF4G2. Also binds to dephosphorylated ERK1 and ERK2, and to the p38 kinases. Mg(2+) is required as a cofactor. In terms of processing, dual phosphorylation of Thr-197 and Thr-202 activates the kinase. Phosphorylation of Thr-332 activates the kinase. MAPK3/ERK1 is one of the kinases which activate MKNK1/MNK1. Phosphorylation by PAK2 leads to a reduced phosphorylation of EIF4G1.

The enzyme catalyses L-seryl-[protein] + ATP = O-phospho-L-seryl-[protein] + ADP + H(+). It catalyses the reaction L-threonyl-[protein] + ATP = O-phospho-L-threonyl-[protein] + ADP + H(+). Phosphorylated and activated by the p38 kinases and kinases in the Erk pathway. Functionally, may play a role in the response to environmental stress and cytokines. Appears to regulate translation by phosphorylating EIF4E, thus increasing the affinity of this protein for the 7-methylguanosine-containing mRNA cap. The protein is MAP kinase-interacting serine/threonine-protein kinase 1 (MKNK1) of Bos taurus (Bovine).